The primary structure comprises 214 residues: STS14 protein (214 aa).

The N-terminal stretch at 1-19 is a signal peptide; the sequence is MFVLSTAMACLVYIYIYIY. Repeat copies occupy residues 13 to 14, 15 to 16, and 17 to 18. A 3 X 2 AA tandem repeats of Y-I region spans residues 13 to 18; the sequence is YIYIYI. An SCP domain is found at 80-200; the sequence is LDAHNKARSE…YEGPATLTVC (121 aa).

It belongs to the CRISP family. As to expression, highly expressed in the stigma and stylar cortex throughout pistil development. Not expressed in other organs.

May protect the outer tissues of the pistil from pathogen attack. In Solanum tuberosum (Potato), this protein is STS14 protein (STS14).